The primary structure comprises 364 residues: Aminomethyltransferase (364 aa).

This sequence belongs to the GcvT family. The glycine cleavage system is composed of four proteins: P, T, L and H.

It catalyses the reaction N(6)-[(R)-S(8)-aminomethyldihydrolipoyl]-L-lysyl-[protein] + (6S)-5,6,7,8-tetrahydrofolate = N(6)-[(R)-dihydrolipoyl]-L-lysyl-[protein] + (6R)-5,10-methylene-5,6,7,8-tetrahydrofolate + NH4(+). In terms of biological role, the glycine cleavage system catalyzes the degradation of glycine. This is Aminomethyltransferase from Salmonella arizonae (strain ATCC BAA-731 / CDC346-86 / RSK2980).